The sequence spans 358 residues: S-adenosylmethionine decarboxylase proenzyme (358 aa).

Residues Glu11 and Glu14 contribute to the active site. Residue Ser71 is the Schiff-base intermediate with substrate; via pyruvic acid of the active site. Ser71 is modified (pyruvic acid (Ser); by autocatalysis). Cys85 (proton donor; for catalytic activity) is an active-site residue. Residues Ser234 and His247 each act as proton acceptor; for processing activity in the active site.

It belongs to the eukaryotic AdoMetDC family. Requires pyruvate as cofactor. In terms of processing, is synthesized initially as an inactive proenzyme. Formation of the active enzyme involves a self-maturation process in which the active site pyruvoyl group is generated from an internal serine residue via an autocatalytic post-translational modification. Two non-identical subunits are generated from the proenzyme in this reaction, and the pyruvate is formed at the N-terminus of the alpha chain, which is derived from the carboxyl end of the proenzyme. The post-translation cleavage follows an unusual pathway, termed non-hydrolytic serinolysis, in which the side chain hydroxyl group of the serine supplies its oxygen atom to form the C-terminus of the beta chain, while the remainder of the serine residue undergoes an oxidative deamination to produce ammonia and the pyruvoyl group blocking the N-terminus of the alpha chain.

The enzyme catalyses S-adenosyl-L-methionine + H(+) = S-adenosyl 3-(methylsulfanyl)propylamine + CO2. The protein operates within amine and polyamine biosynthesis; S-adenosylmethioninamine biosynthesis; S-adenosylmethioninamine from S-adenosyl-L-methionine: step 1/1. This is S-adenosylmethionine decarboxylase proenzyme (SAMDC) from Solanum chilense (Tomato).